We begin with the raw amino-acid sequence, 344 residues long: MRKLFLDAFKHEKLEKPPIWIMRQAGRYLPEYRAVRSKFENFMDMCRNADACCEVALHPLERYDLDAAIVFSDILTIPEAMGMDLKFIKGVGPVFSDPIESEKDLNRLKSAEDSVGDLEYVYNAVRTTKAAINVPLIGFTGSPWTLAAYMVEGSGSKQFSKLRKMMYANPQLMHALLQRLADITVIYLLEQVKAGASSLMIFDTWGGILPLEQYKEFSLKYMEYIAKNVKQKSNVPVVFFTKGGSNFFEELKDKSCDGVGVDWNVTLDQARHRIGVGKVLQGNFDPAFLYGTSDSIRNTVKKNMEFIQSDKLNNYIVNLGHGIYPDINPDNVKIMVDAIREFSV.

Residues 23–27, Asp-73, Tyr-149, Thr-204, and His-321 contribute to the substrate site; that span reads RQAGR.

Belongs to the uroporphyrinogen decarboxylase family. As to quaternary structure, homodimer.

Its subcellular location is the cytoplasm. It carries out the reaction uroporphyrinogen III + 4 H(+) = coproporphyrinogen III + 4 CO2. It functions in the pathway porphyrin-containing compound metabolism; protoporphyrin-IX biosynthesis; coproporphyrinogen-III from 5-aminolevulinate: step 4/4. In terms of biological role, catalyzes the decarboxylation of four acetate groups of uroporphyrinogen-III to yield coproporphyrinogen-III. The chain is Uroporphyrinogen decarboxylase from Francisella philomiragia subsp. philomiragia (strain ATCC 25017 / CCUG 19701 / FSC 153 / O#319-036).